Reading from the N-terminus, the 311-residue chain is MARRELGPAALAVAQAVERMVRGVDRFVVGCSGGPDSLALALASKWASRRCESGVRVVIVDHQLQQGSDEVAERTRDLLVRRGMDACVRRVDVDADDPDGPEAAARTARRAALLDVAGDEPVLLGHTRDDQAEQVLLSLARGSGATSLAGIRPRSGQFWHPLLEVRRAQTVQACREWEVEPWQDPHNGDPRFLRSRVRTELMPVMEEVLGPEVAASLARSATLLAGEDEVVARVARMWADEHGVKANELPGLRGVEVGLARRVVKEWLPQARMVHVDAVLGLLDGPGGAGVDVPGGRVEMRQGTLYLARRL.

An ATP-binding site is contributed by 32–37; the sequence is SGGPDS.

Belongs to the tRNA(Ile)-lysidine synthase family.

The protein localises to the cytoplasm. It catalyses the reaction cytidine(34) in tRNA(Ile2) + L-lysine + ATP = lysidine(34) in tRNA(Ile2) + AMP + diphosphate + H(+). In terms of biological role, ligates lysine onto the cytidine present at position 34 of the AUA codon-specific tRNA(Ile) that contains the anticodon CAU, in an ATP-dependent manner. Cytidine is converted to lysidine, thus changing the amino acid specificity of the tRNA from methionine to isoleucine. The polypeptide is tRNA(Ile)-lysidine synthase (Cutibacterium acnes (strain DSM 16379 / KPA171202) (Propionibacterium acnes)).